A 673-amino-acid chain; its full sequence is Putative transcription factor tau subunit sfc9 (673 aa).

May be a component of the TFIIIC complex.

The protein resides in the nucleus. This Schizosaccharomyces pombe (strain 972 / ATCC 24843) (Fission yeast) protein is Putative transcription factor tau subunit sfc9.